A 636-amino-acid polypeptide reads, in one-letter code: Topoisomerase I damage affected protein 7 (636 aa).

Polar residues predominate over residues 1–18 (MNSNSTIGRTTLGESDTI). Disordered regions lie at residues 1-33 (MNSN…NSRS), 87-109 (TLVS…QYDP), 246-271 (NKDT…SSTN), 299-326 (PTSS…DDTT), and 339-362 (QSTT…STSP). Residue Asn-4 is glycosylated (N-linked (GlcNAc...) asparagine). Low complexity-rich tracts occupy residues 19-33 (SLSF…NSRS) and 87-108 (TLVS…SQYD). Asn-257 carries an N-linked (GlcNAc...) asparagine glycan. Residues 457–477 (IVGSVVGSVGGILICVLVVWF) traverse the membrane as a helical segment. A glycan (N-linked (GlcNAc...) asparagine) is linked at Asn-492. Positions 510 to 541 (QAKEASLQAQDSGSQQRNTETASANNPFSNEF) are enriched in polar residues. Residues 510–551 (QAKEASLQAQDSGSQQRNTETASANNPFSNEFNFKARGNPPP) are disordered. Lys-512 participates in a covalent cross-link: Glycyl lysine isopeptide (Lys-Gly) (interchain with G-Cter in ubiquitin). 3 N-linked (GlcNAc...) asparagine glycosylation sites follow: Asn-557, Asn-562, and Asn-626. Ser-628 is subject to Phosphoserine.

This sequence belongs to the TDA7 family.

It is found in the vacuole membrane. This Saccharomyces cerevisiae (strain ATCC 204508 / S288c) (Baker's yeast) protein is Topoisomerase I damage affected protein 7 (TDA7).